The following is a 328-amino-acid chain: Phenylalanine--tRNA ligase alpha subunit (328 aa).

Glu245 is a binding site for Mg(2+).

Belongs to the class-II aminoacyl-tRNA synthetase family. Phe-tRNA synthetase alpha subunit type 1 subfamily. Tetramer of two alpha and two beta subunits. Mg(2+) serves as cofactor.

Its subcellular location is the cytoplasm. The enzyme catalyses tRNA(Phe) + L-phenylalanine + ATP = L-phenylalanyl-tRNA(Phe) + AMP + diphosphate + H(+). In Helicobacter pylori (strain G27), this protein is Phenylalanine--tRNA ligase alpha subunit.